The chain runs to 285 residues: Putative lipoprotein SCO4650 (285 aa).

The signal sequence occupies residues 1 to 20 (MTGTTARRTVVSVAVSAALA). Cys21 carries N-palmitoyl cysteine lipidation. Cys21 is lipidated: S-diacylglycerol cysteine. Residues 27–63 (GPGGSDDAGHSTGPTGSARPSASAPASSRAPALTGPS) form a disordered region. A compositionally biased stretch (low complexity) spans 43-58 (SARPSASAPASSRAPA).

Its subcellular location is the cell membrane. In Streptomyces coelicolor (strain ATCC BAA-471 / A3(2) / M145), this protein is Putative lipoprotein SCO4650.